Here is a 429-residue protein sequence, read N- to C-terminus: Probable M18 family aminopeptidase 2 (429 aa).

Residues His-82, His-156, and His-401 each contribute to the Zn(2+) site.

Belongs to the peptidase M18 family. Requires Zn(2+) as cofactor.

This is Probable M18 family aminopeptidase 2 from Pseudomonas putida (strain ATCC 700007 / DSM 6899 / JCM 31910 / BCRC 17059 / LMG 24140 / F1).